A 771-amino-acid polypeptide reads, in one-letter code: MSGFLASLDPRRVQWGAAWYAMHSRILRTKPVESMLEGTGTTSAHGTKLAQVLTTVDLISLGVGSCVGTGMYVVSGLVAKEMAGPGVIVSFIIAAVASILSGVCYAEFGVRVPKTTGSAYTYSYVTVGEFVAFFIGWNLILEYLIGTAAGASALSSMFDSLANHSISRWMVDTVGTLNGLGKGEESYPDLLALVIAVIVTIIVALGVKNSVGFNNVLNVLNLAVWVFIMIAGLFFINGKYWAEGQFLPHGWSGVLQGAATCFYAFIGFDIIATTGEEAKNPNTSIPYAITASLVICLTAYVSVSMILTLMVPYYAIDTESPLMEMFVAHGFYAAKFVVAIGSVAGLTVSLLGSLFPMPRVIYAMAGDGLLFRFLAHVSSYTETPVVACIVSGFLAALLSLLVSLRDLIEMMSIGTLLAYTLVSVCVLLLRYQPESDIDGFVKFLSEEHTKKKEGILADCEKETCSPVSEGEEFSSPATNTCGAKNLPSLGDNEMLIGKSDKSAYNVNHPNYGTVDMTTGIEADESENIYLIKLKKLIGPRYYTMRIRLGLPGKMDRPTAATGHTVTICVLLLFILMFIFCSFIIFGSEYISGQSWWAILLVVLMMLLISVLVFVILQQPENPKKLPYMAPCLPFVPAFAMLVNIYLMLKLSTITWIRFAVWCFVGMLIYFGYGIWNSTLEISAREQALHQSTYQRYDVDDPFSVEEGFSYATEGESQEDWGGPAEDKGFYYQQMSDAKANSRTSSKAKSKSKHKQNSEALIANDELDCSPE.

6 consecutive transmembrane segments (helical) span residues 58–78 (LISLGVGSCVGTGMYVVSGLV), 83–103 (AGPGVIVSFIIAAVASILSGV), 119–141 (AYTYSYVTVGEFVAFFIGWNLIL), 187–207 (YPDLLALVIAVIVTIIVALGV), 216–236 (VLNVLNLAVWVFIMIAGLFFI), and 251–271 (WSGVLQGAATCFYAFIGFDII). A glycan (N-linked (GlcNAc...) asparagine) is linked at asparagine 282. Helical transmembrane passes span 291–311 (ASLVICLTAYVSVSMILTLMV), 336–356 (FVVAIGSVAGLTVSLLGSLFP), 384–404 (PVVACIVSGFLAALLSLLVSL), and 407–427 (LIEMMSIGTLLAYTLVSVCVL). Phosphoserine occurs at positions 465, 468, 475, and 488. 4 consecutive transmembrane segments (helical) span residues 565–585 (VTICVLLLFILMFIFCSFIIF), 596–616 (WAILLVVLMMLLISVLVFVIL), 628–648 (MAPCLPFVPAFAMLVNIYLML), and 655–675 (WIRFAVWCFVGMLIYFGYGIW). Residue asparagine 676 is glycosylated (N-linked (GlcNAc...) asparagine). The tract at residues 735 to 771 (SDAKANSRTSSKAKSKSKHKQNSEALIANDELDCSPE) is disordered. A compositionally biased stretch (basic residues) spans 745-754 (SKAKSKSKHK). Residues serine 757 and serine 769 each carry the phosphoserine modification.

Belongs to the amino acid-polyamine-organocation (APC) superfamily. As to expression, expressed in retina, brain and spinal cord. In the retina, expressed in the inner nuclear layer and photoreceptor layer (at protein level). Expressed in liver, spleen, lung, kidney intestine and brain (at protein level).

The protein localises to the lysosome membrane. It carries out the reaction 4-aminobutanoate(in) = 4-aminobutanoate(out). In terms of biological role, imports 4-aminobutanoate (GABA) into lysosomes. May act as a GABA sensor that regulates mTORC2-dependent INS signaling and gluconeogenesis. The transport mechanism and substrate selectivity remain to be elucidated. The protein is Solute carrier family 7 member 14 of Mus musculus (Mouse).